A 66-amino-acid chain; its full sequence is Small ribosomal subunit protein bS21 (66 aa).

This sequence belongs to the bacterial ribosomal protein bS21 family.

The polypeptide is Small ribosomal subunit protein bS21 (Persephonella marina (strain DSM 14350 / EX-H1)).